A 904-amino-acid chain; its full sequence is Transcription factor E2F7 (904 aa).

The disordered stretch occupies residues threonine 61–glutamate 80. Serine 96 bears the Phosphoserine mark. The DNA-binding element occupies arginine 143–glycine 212. The span at glycine 252–aspartate 269 shows a compositional bias: basic and acidic residues. Positions glycine 252–arginine 283 are disordered. Residues arginine 283–glycine 368 mediate DNA binding. Serine 411 is modified (phosphoserine). Residues leucine 560–threonine 628 form a disordered region. Serine 833 carries the phosphoserine modification. The tract at residues alanine 846–aspartate 904 is disordered. The span at serine 886–aspartate 904 shows a compositional bias: polar residues.

Belongs to the E2F/DP family. Interacts with HIF1A. Homodimer and heterodimer: mainly forms homodimers and, to a lesser extent, heterodimers with E2F8. Dimerization is important for DNA-binding. Interacts with MN1. As to expression, widely expressed with highest levels in skin and thymus and very low levels in brain, muscle and stomach. Expressed in trophoblast giant cells throughout placenta development (at protein level).

Its subcellular location is the nucleus. In terms of biological role, atypical E2F transcription factor that participates in various processes such as angiogenesis, polyploidization of specialized cells and DNA damage response. Mainly acts as a transcription repressor that binds DNA independently of DP proteins and specifically recognizes the E2 recognition site 5'-TTTC[CG]CGC-3'. Directly represses transcription of classical E2F transcription factors such as E2F1. Acts as a regulator of S-phase by recognizing and binding the E2-related site 5'-TTCCCGCC-3' and mediating repression of G1/S-regulated genes. Plays a key role in polyploidization of cells in placenta and liver by regulating the endocycle, probably by repressing genes promoting cytokinesis and antagonizing action of classical E2F proteins (E2F1, E2F2 and/or E2F3). Required for placental development by promoting polyploidization of trophoblast giant cells. Also involved in DNA damage response: up-regulated by p53/TP53 following genotoxic stress and acts as a downstream effector of p53/TP53-dependent repression by mediating repression of indirect p53/TP53 target genes involved in DNA replication. Acts as a promoter of sprouting angiogenesis, possibly by acting as a transcription activator: associates with HIF1A, recognizes and binds the VEGFA promoter, which is different from canonical E2 recognition site, and activates expression of the VEGFA gene. Acts as a negative regulator of keratinocyte differentiation. The chain is Transcription factor E2F7 (E2f7) from Mus musculus (Mouse).